We begin with the raw amino-acid sequence, 209 residues long: Eukaryotic translation initiation factor 4E (209 aa).

Belongs to the eukaryotic initiation factor 4E family. EIF4F is a multi-subunit complex, the composition of which varies with external and internal environmental conditions. It is composed of at least eIF4A, eIF4E and eIF4G. eIF4E is also known to interact with other partners.

In terms of biological role, recognizes and binds the 7-methylguanosine-containing mRNA cap during an early step in the initiation of protein synthesis and facilitates ribosome binding by inducing the unwinding of the mRNAs secondary structures. The polypeptide is Eukaryotic translation initiation factor 4E (TIF45) (Candida glabrata (strain ATCC 2001 / BCRC 20586 / JCM 3761 / NBRC 0622 / NRRL Y-65 / CBS 138) (Yeast)).